The following is a 147-amino-acid chain: Hemoglobin subunit beta (147 aa).

N-acetylvaline is present on valine 2. A Globin domain is found at 3–147 (HLSGSEKTAV…VSHALAHKYH (145 aa)). Threonine 13 is subject to Phosphothreonine. Serine 45 is modified (phosphoserine). Lysine 60 bears the N6-acetyllysine mark. Histidine 64 contacts heme b. Lysine 83 is modified (N6-acetyllysine). Histidine 93 provides a ligand contact to heme b. An S-nitrosocysteine modification is found at cysteine 94. An N6-acetyllysine modification is found at lysine 145.

This sequence belongs to the globin family. As to quaternary structure, heterotetramer of two alpha chains and two beta chains. Red blood cells.

Involved in oxygen transport from the lung to the various peripheral tissues. The protein is Hemoglobin subunit beta (HBB) of Tachyglossus aculeatus aculeatus (Southeast Australian short-beaked echidna).